Reading from the N-terminus, the 125-residue chain is Cyclic diguanosine monophosphate-binding protein PA4608 (125 aa).

6–13 (DERRRFHR) is a binding site for 3',3'-c-di-GMP. Residues 7–103 (ERRRFHRIAF…SISHLRRLVE (97 aa)) enclose the PilZ domain. The RXXXR motif; surrounds the surface of the c-di-GMP binding site motif lies at 9–13 (RRFHR). Positions 35–40 (DVSLHG) match the DXSXXG motif; surrounds the surface of the c-di-GMP binding site motif. Trp77 provides a ligand contact to 3',3'-c-di-GMP.

As to quaternary structure, monomer in both c-di-GMP-bound and free forms.

Functionally, binds the second messenger bis-(3'-5') cyclic dimeric guanosine monophosphate (c-di-GMP). Can bind two c-di-GMP molecules per monomer. May play a role in bacterial second-messenger regulated processes. Binding to c-di-GMP induces a conformational change of the C- and N-termini resulting in the exposure of a highly negative surface on one side of the protein to a possible effector protein. The polypeptide is Cyclic diguanosine monophosphate-binding protein PA4608 (Pseudomonas aeruginosa (strain ATCC 15692 / DSM 22644 / CIP 104116 / JCM 14847 / LMG 12228 / 1C / PRS 101 / PAO1)).